Reading from the N-terminus, the 477-residue chain is Histone-lysine N-methyltransferase SUV39H2 (477 aa).

Residues 1–59 (MATARAKARGSEAGARCHRAPGPPPRPKARRTARRRRAETLTARRSRPSAGERRAGSQR) are disordered. Residues 27 to 37 (PKARRTARRRR) are compositionally biased toward basic residues. Positions 118–176 (YEVEYLCDYKVAKGVEYYLVKWKGWPDSTNTWEPLRNLRCPQLLRQFSDDKKTYLAQER) constitute a Chromo domain. In terms of domain architecture, Pre-SET spans 256–314 (FGCSCTDCFFDKCCPAEAGVVLAYNKKQQIKIQPGTPIYECNSRCRCGPECPNRIVQKG). Zn(2+) is bound by residues Cys258, Cys260, Cys263, Cys268, Cys269, Cys296, Cys300, Cys302, and Cys306. An SET domain is found at 317–440 (YSLCIFKTSN…AGEELTFDYQ (124 aa)). S-adenosyl-L-methionine-binding positions include 328–330 (CGW), Tyr371, and 397–398 (NH). Cys400 contacts Zn(2+). Residues Ser448, Ser451, and Ser455 each carry the phosphoserine modification. Positions 461 to 477 (VRTQCKCGAETCRGYLN) constitute a Post-SET domain. Zn(2+) is bound by residues Cys465, Cys467, and Cys472.

It belongs to the class V-like SAM-binding methyltransferase superfamily. Histone-lysine methyltransferase family. Suvar3-9 subfamily. In terms of assembly, interacts with SMAD5. The large PER complex involved in the histone methylation is composed of at least PER2, CBX3, TRIM28, SUV39H1 and/or SUV39H2; CBX3 mediates the formation of the complex. In terms of processing, ubiquitinated by the DCX(DCAF13) E3 ubiquitin ligase complex, leading to its degradation. As to expression, testis specific; predominant expression in type B spermatogonia and preleptotene spermatocytes.

The protein localises to the nucleus. The protein resides in the chromosome. It is found in the centromere. It catalyses the reaction L-lysyl(9)-[histone H3] + 3 S-adenosyl-L-methionine = N(6),N(6),N(6)-trimethyl-L-lysyl(9)-[histone H3] + 3 S-adenosyl-L-homocysteine + 3 H(+). Functionally, histone methyltransferase that specifically trimethylates 'Lys-9' of histone H3 using monomethylated H3 'Lys-9' as substrate. H3 'Lys-9' trimethylation represents a specific tag for epigenetic transcriptional repression by recruiting HP1 (CBX1, CBX3 and/or CBX5) proteins to methylated histones. Mainly functions in heterochromatin regions, thereby playing a central role in the establishment of constitutive heterochromatin at pericentric and telomere regions. H3 'Lys-9' trimethylation is also required to direct DNA methylation at pericentric repeats. SUV39H1 is targeted to histone H3 via its interaction with RB1 and is involved in many processes, such as cell cycle regulation, transcriptional repression and regulation of telomere length. May participate in regulation of higher-order chromatin organization during spermatogenesis. Recruited by the large PER complex to the E-box elements of the circadian target genes such as PER2 itself or PER1, contributes to the conversion of local chromatin to a heterochromatin-like repressive state through H3 'Lys-9' trimethylation. The protein is Histone-lysine N-methyltransferase SUV39H2 (Suv39h2) of Mus musculus (Mouse).